A 347-amino-acid polypeptide reads, in one-letter code: Protein RecA (347 aa).

65 to 72 (GPESSGKT) contributes to the ATP binding site. The segment covering 327 to 336 (KFEPTELSRE) has biased composition (basic and acidic residues). The tract at residues 327-347 (KFEPTELSREEGDEDTLEDAM) is disordered. The span at 337-347 (EGDEDTLEDAM) shows a compositional bias: acidic residues.

The protein belongs to the RecA family.

The protein resides in the cytoplasm. Functionally, can catalyze the hydrolysis of ATP in the presence of single-stranded DNA, the ATP-dependent uptake of single-stranded DNA by duplex DNA, and the ATP-dependent hybridization of homologous single-stranded DNAs. It interacts with LexA causing its activation and leading to its autocatalytic cleavage. The polypeptide is Protein RecA (Xylella fastidiosa (strain M12)).